The primary structure comprises 536 residues: Apolipoprotein N-acyltransferase (536 aa).

The next 7 helical transmembrane spans lie at 10-30 (IASGIILAWGWKRAVIALLAG), 42-62 (AWPVLFITFPIAVWLIDGSAA), 76-96 (WWFGFGYFVPGLYWIGYAFLV), 107-127 (AAICGLPAYLALFTALGFALA), 136-158 (LRILSLAVSLTISEWLRGHLLTG), 181-201 (IGIWGLTLLTVAIFASPAVLI), and 212-232 (AVPAMALGVLAAMTVFGGIRL). One can recognise a CN hydrolase domain in the interval 248 to 501 (MQPNLPQDAR…EGVLDSGLPA (254 aa)). The active-site Proton acceptor is glutamate 295. Lysine 360 is an active-site residue. Cysteine 413 serves as the catalytic Nucleophile. Residues 509–529 (ARVGELPAAVLVALVMMLVLL) traverse the membrane as a helical segment.

Belongs to the CN hydrolase family. Apolipoprotein N-acyltransferase subfamily.

The protein resides in the cell inner membrane. It catalyses the reaction N-terminal S-1,2-diacyl-sn-glyceryl-L-cysteinyl-[lipoprotein] + a glycerophospholipid = N-acyl-S-1,2-diacyl-sn-glyceryl-L-cysteinyl-[lipoprotein] + a 2-acyl-sn-glycero-3-phospholipid + H(+). It participates in protein modification; lipoprotein biosynthesis (N-acyl transfer). Catalyzes the phospholipid dependent N-acylation of the N-terminal cysteine of apolipoprotein, the last step in lipoprotein maturation. The chain is Apolipoprotein N-acyltransferase from Rhodopseudomonas palustris (strain ATCC BAA-98 / CGA009).